The chain runs to 287 residues: Polyamine aminopropyltransferase (287 aa).

Residues 9-242 (GSWLDEYQND…GIWSWTFASI (234 aa)) form the PABS domain. Glutamine 36 contacts S-methyl-5'-thioadenosine. Spermidine-binding residues include histidine 67 and aspartate 91. Residues glutamate 111 and 143-144 (NG) contribute to the S-methyl-5'-thioadenosine site. The Proton acceptor role is filled by aspartate 162. Residue proline 169 coordinates S-methyl-5'-thioadenosine.

Belongs to the spermidine/spermine synthase family. In terms of assembly, homodimer or homotetramer.

The protein resides in the cytoplasm. The catalysed reaction is S-adenosyl 3-(methylsulfanyl)propylamine + putrescine = S-methyl-5'-thioadenosine + spermidine + H(+). Its pathway is amine and polyamine biosynthesis; spermidine biosynthesis; spermidine from putrescine: step 1/1. Its function is as follows. Catalyzes the irreversible transfer of a propylamine group from the amino donor S-adenosylmethioninamine (decarboxy-AdoMet) to putrescine (1,4-diaminobutane) to yield spermidine. The polypeptide is Polyamine aminopropyltransferase (Prochlorococcus marinus (strain SARG / CCMP1375 / SS120)).